Here is a 539-residue protein sequence, read N- to C-terminus: Chaperonin GroEL (539 aa).

ATP contacts are provided by residues 29 to 32 (TIGP), 86 to 90 (DGTTT), Gly-413, 476 to 478 (NAA), and Asp-492.

It belongs to the chaperonin (HSP60) family. Forms a cylinder of 14 subunits composed of two heptameric rings stacked back-to-back. Interacts with the co-chaperonin GroES.

Its subcellular location is the cytoplasm. The enzyme catalyses ATP + H2O + a folded polypeptide = ADP + phosphate + an unfolded polypeptide.. In terms of biological role, together with its co-chaperonin GroES, plays an essential role in assisting protein folding. The GroEL-GroES system forms a nano-cage that allows encapsulation of the non-native substrate proteins and provides a physical environment optimized to promote and accelerate protein folding. In Staphylococcus haemolyticus (strain JCSC1435), this protein is Chaperonin GroEL.